We begin with the raw amino-acid sequence, 227 residues long: ATP-dependent dethiobiotin synthetase BioD (227 aa).

Residue D13–V18 coordinates ATP. Mg(2+) is bound at residue T17. The active site involves K38. ATP-binding positions include D55, E116–G119, and N176–R177. The Mg(2+) site is built by D55 and E116.

This sequence belongs to the dethiobiotin synthetase family. In terms of assembly, homodimer. The cofactor is Mg(2+).

It is found in the cytoplasm. The enzyme catalyses (7R,8S)-7,8-diammoniononanoate + CO2 + ATP = (4R,5S)-dethiobiotin + ADP + phosphate + 3 H(+). It functions in the pathway cofactor biosynthesis; biotin biosynthesis; biotin from 7,8-diaminononanoate: step 1/2. Its function is as follows. Catalyzes a mechanistically unusual reaction, the ATP-dependent insertion of CO2 between the N7 and N8 nitrogen atoms of 7,8-diaminopelargonic acid (DAPA, also called 7,8-diammoniononanoate) to form a ureido ring. The chain is ATP-dependent dethiobiotin synthetase BioD from Aliivibrio salmonicida (strain LFI1238) (Vibrio salmonicida (strain LFI1238)).